The primary structure comprises 156 residues: MPKVAVGGTFQYLHDGHARLIEKAFEIAGDGKVYIGLTSDEMLQKNHSIDNYENRRVRLLEYIDEMEIPKEKYEITRLNDPCGPTVEEDFDYIVVSPETYPVALKINRIREKKGKNPLEIVYVEYVMAEDGTPISSTRIAKGEIDRHGKMKRESQA.

Belongs to the eukaryotic CoaD family.

The protein resides in the cytoplasm. It carries out the reaction (R)-4'-phosphopantetheine + ATP + H(+) = 3'-dephospho-CoA + diphosphate. The protein operates within cofactor biosynthesis; coenzyme A biosynthesis. In terms of biological role, reversibly transfers an adenylyl group from ATP to 4'-phosphopantetheine, yielding dephospho-CoA (dPCoA) and pyrophosphate. The polypeptide is Phosphopantetheine adenylyltransferase (Methanosarcina acetivorans (strain ATCC 35395 / DSM 2834 / JCM 12185 / C2A)).